Here is a 123-residue protein sequence, read N- to C-terminus: Alpha-lactalbumin (123 aa).

A C-type lysozyme domain is found at K1–L123. Intrachain disulfides connect C6-C120, C28-C111, C61-C77, and C73-C91. Ca(2+) contacts are provided by K79, D82, D84, D87, and D88.

It belongs to the glycosyl hydrolase 22 family. In terms of assembly, lactose synthase (LS) is a heterodimer of a catalytic component, beta1,4-galactosyltransferase (beta4Gal-T1) and a regulatory component, alpha-lactalbumin (LA). Mammary gland specific. Secreted in milk.

The protein localises to the secreted. Its function is as follows. Regulatory subunit of lactose synthase, changes the substrate specificity of galactosyltransferase in the mammary gland making glucose a good acceptor substrate for this enzyme. This enables LS to synthesize lactose, the major carbohydrate component of milk. In other tissues, galactosyltransferase transfers galactose onto the N-acetylglucosamine of the oligosaccharide chains in glycoproteins. This Equus asinus (Donkey) protein is Alpha-lactalbumin (LALBA).